Reading from the N-terminus, the 277-residue chain is 3-methyl-2-oxobutanoate hydroxymethyltransferase (277 aa).

Asp-49 and Asp-88 together coordinate Mg(2+). 3-methyl-2-oxobutanoate contacts are provided by residues Asp-49 to Ser-50, Asp-88, and Lys-118. Glu-120 provides a ligand contact to Mg(2+). The Proton acceptor role is filled by Glu-186.

Belongs to the PanB family. As to quaternary structure, homodecamer; pentamer of dimers. The cofactor is Mg(2+).

The protein localises to the cytoplasm. The catalysed reaction is 3-methyl-2-oxobutanoate + (6R)-5,10-methylene-5,6,7,8-tetrahydrofolate + H2O = 2-dehydropantoate + (6S)-5,6,7,8-tetrahydrofolate. Its pathway is cofactor biosynthesis; (R)-pantothenate biosynthesis; (R)-pantoate from 3-methyl-2-oxobutanoate: step 1/2. Functionally, catalyzes the reversible reaction in which hydroxymethyl group from 5,10-methylenetetrahydrofolate is transferred onto alpha-ketoisovalerate to form ketopantoate. This chain is 3-methyl-2-oxobutanoate hydroxymethyltransferase, found in Cereibacter sphaeroides (strain ATCC 17029 / ATH 2.4.9) (Rhodobacter sphaeroides).